The chain runs to 442 residues: UPF0597 protein HRM2_02820 (442 aa).

It belongs to the UPF0597 family.

The chain is UPF0597 protein HRM2_02820 from Desulforapulum autotrophicum (strain ATCC 43914 / DSM 3382 / VKM B-1955 / HRM2) (Desulfobacterium autotrophicum).